A 452-amino-acid chain; its full sequence is Histone acetyltransferase type B subunit 2 (452 aa).

6 WD repeats span residues 155-195, 205-245, 256-296, 300-340, 344-384, and 401-441; these read YEDG…NSKE, HHTK…SDGS, HHDA…NKAA, KESR…TPIS, SHCD…DDLS, and GHSS…SNDE.

The protein belongs to the WD repeat RBAP46/RBAP48/MSI1 family. In terms of assembly, component of the HAT-B complex composed of at least HAT1 and HAT2. The HAT-B complex binds to histone H4 tail.

The protein resides in the cytoplasm. It is found in the nucleus. Regulatory subunit of the histone acetylase B (HAT-B) complex. The complex acetylates 'Lys-12' of histone H4 which is required for telomeric silencing. The polypeptide is Histone acetyltransferase type B subunit 2 (HAT2) (Yarrowia lipolytica (strain CLIB 122 / E 150) (Yeast)).